We begin with the raw amino-acid sequence, 662 residues long: A-kinase anchor protein 10, mitochondrial (662 aa).

Residues 1–28 constitute a mitochondrion transit peptide; sequence MRGAGPSPRQSPRTLRPDPGPAMSFFRR. The tract at residues 1–55 is disordered; that stretch reads MRGAGPSPRQSPRTLRPDPGPAMSFFRRKVKGKEQEKTSDVKSIKASISVHSPQK. The span at 32–43 shows a compositional bias: basic and acidic residues; the sequence is GKEQEKTSDVKS. A phosphoserine mark is found at Ser52 and Ser189. 2 RGS domains span residues 125–369 and 379–505; these read TLEQ…CKYQ and YLAD…YKYL. The span at 261–280 shows a compositional bias: polar residues; sequence SMETQESSSTLTVASRNSPA. A disordered region spans residues 261 to 282; the sequence is SMETQESSSTLTVASRNSPASP. The residue at position 281 (Ser281) is a Phosphoserine. A disordered region spans residues 524 to 548; that stretch reads LTAPGSVGPPDESHPGSSDSSASQS. A PKA-RII subunit binding region spans residues 634–647; sequence LAWKIAKMIVSDIM.

The protein resides in the mitochondrion. It localises to the membrane. Its subcellular location is the cytoplasm. Its function is as follows. Differentially targeted protein that binds to type I and II regulatory subunits of protein kinase A and anchors them to the mitochondria or the plasma membrane. Although the physiological relevance between PKA and AKAPS with mitochondria is not fully understood, one idea is that BAD, a proapoptotic member, is phosphorylated and inactivated by mitochondria-anchored PKA. It cannot be excluded too that it may facilitate PKA as well as G protein signal transduction, by acting as an adapter for assembling multiprotein complexes. With its RGS domain, it could lead to the interaction to G-alpha proteins, providing a link between the signaling machinery and the downstream kinase. The protein is A-kinase anchor protein 10, mitochondrial (AKAP10) of Homo sapiens (Human).